An 870-amino-acid chain; its full sequence is MASASSSRAGVALPFEKSQLTLKVVSAKPKVHNRQPRINSYVEVAVDGLPSETKKTGKRIGSSELLWNEIIVLNVTAQSHLDLKVWSCHTLRNELLGTASVNLSNVLKNNGGKMENTQLTLNLQTENKGSVVSGGELTIFLDGPTVDLGSVPNGSAVTDGSQPPSRESSGTAIAPETRHQPPSTNCFGGRSRTHRHSGGSARTATAASEQSPGARNRHRQPVKNSSSSGLANGTVNEEPTPASEPEESSVVGVTSLPAAALSVSSNPNTTSLPAQSTPAEGEEASTSGTQQLPAAAQAPDALPAGWEQRELPNGRVYYVDHNTKTTTWERPLPPGWEKRTDPRGRFYYVDHNTRTTTWQRPTAEYVRNYEQWQSQRNQLQGAMQHFSQRFLYQSSSASTDHDPLGPLPPGWEKRQDNGRVYYVNHNTRTTQWEDPRTQGMIQEPALPPGWEMKYTSEGVRYFVDHNTRTTTFKDPRPGFESGTKQGSPGAYDRSFRWKYHQFRFLCHSNALPSHVKISVSRQTLFEDSFQQIMNMKPYDLRRRLYIIMRGEEGLDYGGIAREWFFLLSHEVLNPMYCLFEYAGKNNYCLQINPASSINPDHLTYFRFIGRFIAMALYHGKFIDTGFTLPFYKRMLNKRPTLKDLESIDPEFYNSIVWIKENNLEECGLELFFIQDMEILGKVTTHELKEGGENIRVTEENKEEYIMLLTDWRFTRGVEEQTKAFLDGFNEVAPLEWLRYFDEKELELMLCGMQEIDMSDWQKNAIYRHYTKSSKQIQWFWQVVKEMDNEKRIRLLQFVTGTCRLPVGGFAELIGSNGPQKFCIDRVGKETWLPRSHTCFNRLDLPPYKSYEQLKEKLLYAIEETEGFGQE.

A C2 domain is found at 1–117 (MASASSSRAG…KNNGGKMENT (117 aa)). The disordered stretch occupies residues 150–300 (SVPNGSAVTD…QLPAAAQAPD (151 aa)). Residues 152 to 171 (PNGSAVTDGSQPPSRESSGT) are compositionally biased toward polar residues. Residues 198-208 (GGSARTATAAS) are compositionally biased toward low complexity. Position 211 is a phosphoserine (S211). 2 stretches are compositionally biased toward polar residues: residues 222–235 (VKNS…NGTV) and 262–289 (SVSS…TSGT). A compositionally biased stretch (low complexity) spans 290–300 (QQLPAAAQAPD). WW domains follow at residues 300–333 (DALP…RPLP), 330–363 (RPLP…RPTA), 405–437 (GPLP…DPRT), and 444–477 (PALP…DPRP). One can recognise an HECT domain in the interval 536–870 (KPYDLRRRLY…IEETEGFGQE (335 aa)). Catalysis depends on C838, which acts as the Glycyl thioester intermediate.

Interacts with SCNN1A, SCNN1B, SCNN1G, WBP1, WBP2 and ATN1. Interacts with ERBB4, NDFIP1 and NDFIP2. Interacts with ARRDC4. Interacts with POU5F1, RBP1, EGR2 and SLC11A2. Interacts (via WW domains) with ARRDC1 (via PPxY motifs); ubiquitinates ARRDC1. Interacts (via WW domains) with ARRDC2 and ARRDC3. Post-translationally, autoubiquitinated. Ubiquitinated by the SCF(FBXL15) complex, leading to its degradation by the proteasome.

Its subcellular location is the nucleus. The enzyme catalyses S-ubiquitinyl-[E2 ubiquitin-conjugating enzyme]-L-cysteine + [acceptor protein]-L-lysine = [E2 ubiquitin-conjugating enzyme]-L-cysteine + N(6)-ubiquitinyl-[acceptor protein]-L-lysine.. It functions in the pathway protein modification; protein ubiquitination. With respect to regulation, activated by NDFIP1- and NDFIP2-binding. Functionally, E3 ubiquitin-protein ligase which accepts ubiquitin from an E2 ubiquitin-conjugating enzyme in the form of a thioester and then directly transfers the ubiquitin to targeted substrates. Polyubiquitinates POU5F1 by 'Lys-63'-linked conjugation and promotes it to proteasomal degradation; regulates POU5F1 protein level during differentiation of embryonal carcinoma cells (ECCs) but not in undifferentiated ECCs and embryonic stem cells (ESCs). Ubiquitinates EGR2 and promotes it to proteasomal degradation; in T-cells the ubiquitination inhibits activation-induced cell death. Ubiquitinates SLC11A2; the ubiquitination is enhanced by presence of NDFIP1 and NDFIP2. Ubiquitinates RPB1 and promotes it to proteasomal degradation. This Mus musculus (Mouse) protein is NEDD4-like E3 ubiquitin-protein ligase WWP2 (Wwp2).